The sequence spans 486 residues: Probable cytosol aminopeptidase (486 aa).

Positions 256 and 261 each coordinate Mn(2+). Lysine 268 is a catalytic residue. 3 residues coordinate Mn(2+): aspartate 280, aspartate 339, and glutamate 341. Arginine 343 is an active-site residue.

This sequence belongs to the peptidase M17 family. Mn(2+) is required as a cofactor.

It localises to the cytoplasm. It catalyses the reaction Release of an N-terminal amino acid, Xaa-|-Yaa-, in which Xaa is preferably Leu, but may be other amino acids including Pro although not Arg or Lys, and Yaa may be Pro. Amino acid amides and methyl esters are also readily hydrolyzed, but rates on arylamides are exceedingly low.. It carries out the reaction Release of an N-terminal amino acid, preferentially leucine, but not glutamic or aspartic acids.. Its function is as follows. Presumably involved in the processing and regular turnover of intracellular proteins. Catalyzes the removal of unsubstituted N-terminal amino acids from various peptides. The sequence is that of Probable cytosol aminopeptidase from Synechococcus sp. (strain ATCC 27144 / PCC 6301 / SAUG 1402/1) (Anacystis nidulans).